A 673-amino-acid chain; its full sequence is Putative potassium transport system protein Kup 1 (673 aa).

13 consecutive transmembrane segments (helical) span residues 14–34, 58–78, 101–121, 147–167, 175–195, 196–216, 220–240, 252–272, 294–314, 345–365, 374–394, 403–423, and 427–447; these read GAGFIIAMGIVYGDIGTSPLY, LSLIIWTLTLITTVKYVWIAL, WLIIPAMIGGAALLSDGALTP, LPIVIITLAILAILFLIQRFG, FGPVMFIWFSFLGITGLINLF, GDFSVLQAINPYWAIHLLLSP, AGIFVLGSVFLATTGAEALYS, VSWPFVKVCIILSYCGQAAWL, LIIFSVVLATLAAIIASQALI, LYIPAVNLGLWLAASFIVVYF, AYGLAITVTMLMTTILLTVYL, VFVVLFFGAFIFIEGLFFAAS, and FLHGGYVVVILAALILFVMAI.

The protein belongs to the HAK/KUP transporter (TC 2.A.72) family.

It localises to the cell membrane. It catalyses the reaction K(+)(in) + H(+)(in) = K(+)(out) + H(+)(out). Its function is as follows. Transport of potassium into the cell. Likely operates as a K(+):H(+) symporter. The sequence is that of Putative potassium transport system protein Kup 1 from Lactococcus lactis subsp. cremoris (strain MG1363).